A 725-amino-acid chain; its full sequence is Catalase-peroxidase (725 aa).

Residues 98–226 constitute a cross-link (tryptophyl-tyrosyl-methioninium (Trp-Tyr) (with M-252)); that stretch reads WHMAGSYRTS…LAAVQMGLIY (129 aa). H99 (proton acceptor) is an active-site residue. A cross-link (tryptophyl-tyrosyl-methioninium (Tyr-Met) (with W-98)) is located at residues 226-252; sequence YVNPEGVNGKSDPQATAYQMRETFARM. H267 is a binding site for heme b.

This sequence belongs to the peroxidase family. Peroxidase/catalase subfamily. Homodimer or homotetramer. Requires heme b as cofactor. Post-translationally, formation of the three residue Trp-Tyr-Met cross-link is important for the catalase, but not the peroxidase activity of the enzyme.

The catalysed reaction is H2O2 + AH2 = A + 2 H2O. It catalyses the reaction 2 H2O2 = O2 + 2 H2O. In terms of biological role, bifunctional enzyme with both catalase and broad-spectrum peroxidase activity. This is Catalase-peroxidase from Paracoccus denitrificans (strain Pd 1222).